Consider the following 123-residue polypeptide: Large ribosomal subunit protein uL14 (123 aa).

This sequence belongs to the universal ribosomal protein uL14 family. In terms of assembly, part of the 50S ribosomal subunit. Forms a cluster with proteins L3 and L19. In the 70S ribosome, L14 and L19 interact and together make contacts with the 16S rRNA in bridges B5 and B8.

In terms of biological role, binds to 23S rRNA. Forms part of two intersubunit bridges in the 70S ribosome. In Vibrio cholerae serotype O1 (strain ATCC 39541 / Classical Ogawa 395 / O395), this protein is Large ribosomal subunit protein uL14.